Consider the following 194-residue polypeptide: MRLCDTDIEHYLDQDLINISPRPTNDKISGATVDVRLGNSFRVFREHATPYIDLSGPREQVSAQLEKIMSDEIILAEGEAFFLHPGELALATTLESVKLPDNIVGWLDGRSSLARLGLMVHVTAHRIDPGWHGKIVLEFFNAGKLPLALRPNMAIGALSFEVLSGAAAKPYNAREDAKYKNQQSAISSRINEDK.

Residues 110–115 (RSSLAR), Asp-128, 136–138 (VLE), Tyr-171, Lys-178, and Gln-182 contribute to the dCTP site. Glu-138 (proton donor/acceptor) is an active-site residue.

Belongs to the dCTP deaminase family. As to quaternary structure, homotrimer.

It carries out the reaction dCTP + H2O + H(+) = dUTP + NH4(+). It participates in pyrimidine metabolism; dUMP biosynthesis; dUMP from dCTP (dUTP route): step 1/2. Its function is as follows. Catalyzes the deamination of dCTP to dUTP. This chain is dCTP deaminase, found in Haemophilus ducreyi (strain 35000HP / ATCC 700724).